The sequence spans 597 residues: ATP-dependent lipid A-core flippase (597 aa).

6 helical membrane passes run 26–46 (LWPY…AMAV), 76–96 (WFVP…QYAS), 138–158 (AIVF…VTLV), 164–184 (VVFL…IVAV), 263–283 (QPLT…IAVV), and 292–312 (VGGF…LKHL). The region spanning 38-321 (IGAIVAMAVS…LMDVNQPLQR (284 aa)) is the ABC transmembrane type-1 domain. The ABC transporter domain occupies 353-590 (VEFRDVSFVY…DGLYAHLHRI (238 aa)). 390–397 (GPSGSGKT) serves as a coordination point for ATP.

The protein belongs to the ABC transporter superfamily. Lipid exporter (TC 3.A.1.106) family. As to quaternary structure, homodimer.

The protein localises to the cell inner membrane. The catalysed reaction is ATP + H2O + lipid A-core oligosaccharideSide 1 = ADP + phosphate + lipid A-core oligosaccharideSide 2.. Functionally, involved in lipopolysaccharide (LPS) biosynthesis. Translocates lipid A-core from the inner to the outer leaflet of the inner membrane. Transmembrane domains (TMD) form a pore in the inner membrane and the ATP-binding domain (NBD) is responsible for energy generation. This chain is ATP-dependent lipid A-core flippase, found in Paraburkholderia xenovorans (strain LB400).